Reading from the N-terminus, the 113-residue chain is Large ribosomal subunit protein uL22 (113 aa).

This sequence belongs to the universal ribosomal protein uL22 family. As to quaternary structure, part of the 50S ribosomal subunit.

In terms of biological role, this protein binds specifically to 23S rRNA; its binding is stimulated by other ribosomal proteins, e.g. L4, L17, and L20. It is important during the early stages of 50S assembly. It makes multiple contacts with different domains of the 23S rRNA in the assembled 50S subunit and ribosome. The globular domain of the protein is located near the polypeptide exit tunnel on the outside of the subunit, while an extended beta-hairpin is found that lines the wall of the exit tunnel in the center of the 70S ribosome. The chain is Large ribosomal subunit protein uL22 from Stenotrophomonas maltophilia (strain K279a).